The primary structure comprises 142 residues: Transcriptional regulator MraZ (142 aa).

SpoVT-AbrB domains follow at residues 5–51 (ASAL…PRPE) and 77–120 (AADV…DAAT).

Belongs to the MraZ family. As to quaternary structure, forms oligomers.

It localises to the cytoplasm. The protein localises to the nucleoid. The polypeptide is Transcriptional regulator MraZ (Cupriavidus pinatubonensis (strain JMP 134 / LMG 1197) (Cupriavidus necator (strain JMP 134))).